A 239-amino-acid polypeptide reads, in one-letter code: Methylthioribulose-1-phosphate dehydratase (239 aa).

C94 serves as a coordination point for substrate. Positions 112 and 114 each coordinate Zn(2+). Catalysis depends on E136, which acts as the Proton donor/acceptor. H192 provides a ligand contact to Zn(2+).

The protein belongs to the aldolase class II family. MtnB subfamily. Requires Zn(2+) as cofactor.

It is found in the cytoplasm. It carries out the reaction 5-(methylsulfanyl)-D-ribulose 1-phosphate = 5-methylsulfanyl-2,3-dioxopentyl phosphate + H2O. Its pathway is amino-acid biosynthesis; L-methionine biosynthesis via salvage pathway; L-methionine from S-methyl-5-thio-alpha-D-ribose 1-phosphate: step 2/6. Functionally, catalyzes the dehydration of methylthioribulose-1-phosphate (MTRu-1-P) into 2,3-diketo-5-methylthiopentyl-1-phosphate (DK-MTP-1-P). Functions in the methionine salvage pathway. May play a role in apoptosis. This is Methylthioribulose-1-phosphate dehydratase from Xenopus tropicalis (Western clawed frog).